Reading from the N-terminus, the 132-residue chain is Large ribosomal subunit protein eL28 (132 aa).

Belongs to the eukaryotic ribosomal protein eL28 family.

In Dictyostelium discoideum (Social amoeba), this protein is Large ribosomal subunit protein eL28 (rpl28).